A 230-amino-acid polypeptide reads, in one-letter code: Octanoyltransferase (230 aa).

In terms of domain architecture, BPL/LPL catalytic spans 38-215; sequence AGGADTLLLL…AVCAALDGVL (178 aa). Substrate-binding positions include 76–83, 145–147, and 158–160; these read RGGKITWH, AIG, and GFA. C176 functions as the Acyl-thioester intermediate in the catalytic mechanism.

The protein belongs to the LipB family.

Its subcellular location is the cytoplasm. The enzyme catalyses octanoyl-[ACP] + L-lysyl-[protein] = N(6)-octanoyl-L-lysyl-[protein] + holo-[ACP] + H(+). Its pathway is protein modification; protein lipoylation via endogenous pathway; protein N(6)-(lipoyl)lysine from octanoyl-[acyl-carrier-protein]: step 1/2. Its function is as follows. Catalyzes the transfer of endogenously produced octanoic acid from octanoyl-acyl-carrier-protein onto the lipoyl domains of lipoate-dependent enzymes. Lipoyl-ACP can also act as a substrate although octanoyl-ACP is likely to be the physiological substrate. In Mycobacterium tuberculosis (strain ATCC 25177 / H37Ra), this protein is Octanoyltransferase.